The chain runs to 394 residues: Cysteine desulfurase IscS (394 aa).

Pyridoxal 5'-phosphate contacts are provided by residues 72 to 73 (GT), N152, Q180, and 200 to 202 (SAH). At K203 the chain carries N6-(pyridoxal phosphate)lysine. T238 serves as a coordination point for pyridoxal 5'-phosphate. C326 (cysteine persulfide intermediate) is an active-site residue. C326 contributes to the [2Fe-2S] cluster binding site.

This sequence belongs to the class-V pyridoxal-phosphate-dependent aminotransferase family. NifS/IscS subfamily. Homodimer. Forms a heterotetramer with IscU, interacts with other sulfur acceptors. Requires pyridoxal 5'-phosphate as cofactor.

It is found in the cytoplasm. The enzyme catalyses (sulfur carrier)-H + L-cysteine = (sulfur carrier)-SH + L-alanine. The protein operates within cofactor biosynthesis; iron-sulfur cluster biosynthesis. Its function is as follows. Master enzyme that delivers sulfur to a number of partners involved in Fe-S cluster assembly, tRNA modification or cofactor biosynthesis. Catalyzes the removal of elemental sulfur atoms from cysteine to produce alanine. Functions as a sulfur delivery protein for Fe-S cluster synthesis onto IscU, an Fe-S scaffold assembly protein, as well as other S acceptor proteins. The sequence is that of Cysteine desulfurase IscS from Dictyoglomus turgidum (strain DSM 6724 / Z-1310).